The primary structure comprises 123 residues: Dihydroneopterin triphosphate 2'-epimerase (123 aa).

It belongs to the DHNA family. Homooctamer. Dimer of tetramers.

The catalysed reaction is 7,8-dihydroneopterin 3'-triphosphate = 7,8-dihydromonapterin 3'-triphosphate. Functionally, catalyzes the epimerization of carbon 2' of the side chain of 7,8-dihydroneopterin triphosphate (H2NTP) to form 7,8-dihydromonapterin triphosphate (H2MTP). Is required for tetrahydromonapterin biosynthesis. The sequence is that of Dihydroneopterin triphosphate 2'-epimerase from Pseudomonas aeruginosa (strain ATCC 15692 / DSM 22644 / CIP 104116 / JCM 14847 / LMG 12228 / 1C / PRS 101 / PAO1).